We begin with the raw amino-acid sequence, 89 residues long: Long neurotoxin homolog TA-bm16 (89 aa).

Residues 1 to 21 (MKTLLLTLVVVTIVCLDLGYT) form the signal peptide. Cystine bridges form between Cys-24/Cys-45, Cys-27/Cys-32, Cys-38/Cys-66, Cys-70/Cys-81, and Cys-82/Cys-87.

It belongs to the three-finger toxin family. Ancestral subfamily. Orphan group V sub-subfamily. Expressed by the venom gland.

Its subcellular location is the secreted. In terms of biological role, exhibits M2 muscarinic acetylcholine receptor (CHRM2)-blocking activity, but has a weak binding activity toward nicotinic AChR. Moreover, it inhibits collagen-induced platelet aggregation. The protein is Long neurotoxin homolog TA-bm16 of Bungarus multicinctus (Many-banded krait).